Consider the following 407-residue polypeptide: 8-amino-7-oxononanoate synthase (407 aa).

Arg-24 provides a ligand contact to substrate. A pyridoxal 5'-phosphate-binding site is contributed by 111 to 112 (GF). His-137 serves as a coordination point for substrate. 3 residues coordinate pyridoxal 5'-phosphate: Ser-183, His-211, and Thr-239. Lys-242 is subject to N6-(pyridoxal phosphate)lysine. Position 356 (Thr-356) interacts with substrate.

It belongs to the class-II pyridoxal-phosphate-dependent aminotransferase family. BioF subfamily. As to quaternary structure, homodimer. The cofactor is pyridoxal 5'-phosphate.

It catalyses the reaction 6-carboxyhexanoyl-[ACP] + L-alanine + H(+) = (8S)-8-amino-7-oxononanoate + holo-[ACP] + CO2. It functions in the pathway cofactor biosynthesis; biotin biosynthesis. Catalyzes the decarboxylative condensation of pimeloyl-[acyl-carrier protein] and L-alanine to produce 8-amino-7-oxononanoate (AON), [acyl-carrier protein], and carbon dioxide. The protein is 8-amino-7-oxononanoate synthase of Stenotrophomonas maltophilia (strain R551-3).